A 191-amino-acid polypeptide reads, in one-letter code: CASP-like protein 1D1 (191 aa).

Topologically, residues 1-22 are cytoplasmic; it reads MTSTSKDTPESGYAVPPPNLFG. The chain crosses the membrane as a helical span at residues 23-43; sequence VDFGLRLLLLASAVSALVVLV. The Extracellular portion of the chain corresponds to 44 to 73; it reads TSKQTESIPTSLPPPFPAFISRDAKFQHSP. Residues 74-94 form a helical membrane-spanning segment; that stretch reads AFIYLLVALSVTCFYSIITMV. The Cytoplasmic portion of the chain corresponds to 95-118; that stretch reads ASFAAITSPSSSPRMLFHLVLSDA. The helical transmembrane segment at 119–139 threads the bilayer; the sequence is VMAGVMASAAGTAGSVAYLGL. At 140 to 160 the chain is on the extracellular side; the sequence is KGNSHVNWNKVCNVYDKFCRH. The chain crosses the membrane as a helical span at residues 161-181; the sequence is VGSSAAVSLVASVLLVSLVVL. Residues 182 to 191 lie on the Cytoplasmic side of the membrane; that stretch reads SSYSLYRRCR.

This sequence belongs to the Casparian strip membrane proteins (CASP) family. As to quaternary structure, homodimer and heterodimers.

Its subcellular location is the cell membrane. This is CASP-like protein 1D1 from Musa acuminata (Banana).